Reading from the N-terminus, the 130-residue chain is MAAASFYGTGKRKSSIARVWLKPGTGVITVNHKTLDEYFGRETSKMVVKQPLELTENLGKFDIYVTVSGGGDSGQAGAIKHGITKALLEVDAALRTPLKKAGFVTRDSRIKERKKYGKKSARASFQFSKR.

Belongs to the universal ribosomal protein uS9 family.

The protein is Small ribosomal subunit protein uS9 of Geotalea daltonii (strain DSM 22248 / JCM 15807 / FRC-32) (Geobacter daltonii).